The following is a 274-amino-acid chain: Large ribosomal subunit protein uL2 (274 aa).

Residues 224-256 form a disordered region; sequence AMNPIDHPHGGGEGRTGEGRHAVDPWGNLTKGY. The span at 229–246 shows a compositional bias: basic and acidic residues; it reads DHPHGGGEGRTGEGRHAV.

Belongs to the universal ribosomal protein uL2 family. As to quaternary structure, part of the 50S ribosomal subunit. Forms a bridge to the 30S subunit in the 70S ribosome.

Its function is as follows. One of the primary rRNA binding proteins. Required for association of the 30S and 50S subunits to form the 70S ribosome, for tRNA binding and peptide bond formation. It has been suggested to have peptidyltransferase activity; this is somewhat controversial. Makes several contacts with the 16S rRNA in the 70S ribosome. The sequence is that of Large ribosomal subunit protein uL2 from Acidovorax sp. (strain JS42).